Reading from the N-terminus, the 231-residue chain is ATP-dependent dethiobiotin synthetase BioD 2 (231 aa).

ATP is bound at residue 13–18; sequence SVGKTV. Mg(2+) is bound at residue T17. K38 is a catalytic residue. Residues D55, 112 to 115, 172 to 173, 201 to 203, and Q208 each bind ATP; these read EGTG, NR, and PYL. D55 and E112 together coordinate Mg(2+).

The protein belongs to the dethiobiotin synthetase family. In terms of assembly, homodimer. It depends on Mg(2+) as a cofactor.

It is found in the cytoplasm. The enzyme catalyses (7R,8S)-7,8-diammoniononanoate + CO2 + ATP = (4R,5S)-dethiobiotin + ADP + phosphate + 3 H(+). It functions in the pathway cofactor biosynthesis; biotin biosynthesis; biotin from 7,8-diaminononanoate: step 1/2. Functionally, catalyzes a mechanistically unusual reaction, the ATP-dependent insertion of CO2 between the N7 and N8 nitrogen atoms of 7,8-diaminopelargonic acid (DAPA, also called 7,8-diammoniononanoate) to form a ureido ring. This Salmonella typhimurium (strain LT2 / SGSC1412 / ATCC 700720) protein is ATP-dependent dethiobiotin synthetase BioD 2.